Reading from the N-terminus, the 612-residue chain is Dihydroxy-acid dehydratase (612 aa).

Aspartate 81 provides a ligand contact to Mg(2+). Residue cysteine 122 coordinates [2Fe-2S] cluster. Aspartate 123 and lysine 124 together coordinate Mg(2+). Lysine 124 bears the N6-carboxylysine mark. Residue cysteine 193 participates in [2Fe-2S] cluster binding. Position 489 (glutamate 489) interacts with Mg(2+). The Proton acceptor role is filled by serine 515.

Belongs to the IlvD/Edd family. As to quaternary structure, homodimer. Requires [2Fe-2S] cluster as cofactor. Mg(2+) is required as a cofactor.

It catalyses the reaction (2R)-2,3-dihydroxy-3-methylbutanoate = 3-methyl-2-oxobutanoate + H2O. The enzyme catalyses (2R,3R)-2,3-dihydroxy-3-methylpentanoate = (S)-3-methyl-2-oxopentanoate + H2O. The protein operates within amino-acid biosynthesis; L-isoleucine biosynthesis; L-isoleucine from 2-oxobutanoate: step 3/4. It participates in amino-acid biosynthesis; L-valine biosynthesis; L-valine from pyruvate: step 3/4. Functionally, functions in the biosynthesis of branched-chain amino acids. Catalyzes the dehydration of (2R,3R)-2,3-dihydroxy-3-methylpentanoate (2,3-dihydroxy-3-methylvalerate) into 2-oxo-3-methylpentanoate (2-oxo-3-methylvalerate) and of (2R)-2,3-dihydroxy-3-methylbutanoate (2,3-dihydroxyisovalerate) into 2-oxo-3-methylbutanoate (2-oxoisovalerate), the penultimate precursor to L-isoleucine and L-valine, respectively. The sequence is that of Dihydroxy-acid dehydratase from Stenotrophomonas maltophilia (strain K279a).